The following is a 365-amino-acid chain: Peptide chain release factor 2 (365 aa).

Gln251 is subject to N5-methylglutamine.

This sequence belongs to the prokaryotic/mitochondrial release factor family. Post-translationally, methylated by PrmC. Methylation increases the termination efficiency of RF2.

The protein resides in the cytoplasm. In terms of biological role, peptide chain release factor 2 directs the termination of translation in response to the peptide chain termination codons UGA and UAA. The polypeptide is Peptide chain release factor 2 (Campylobacter jejuni subsp. doylei (strain ATCC BAA-1458 / RM4099 / 269.97)).